Here is a 210-residue protein sequence, read N- to C-terminus: Imidazole glycerol phosphate synthase subunit HisH (210 aa).

A Glutamine amidotransferase type-1 domain is found at 1–205 (MIAVINYGAG…VELALSRGSG (205 aa)). Cys-79 (nucleophile) is an active-site residue. Active-site residues include His-180 and Glu-182.

Heterodimer of HisH and HisF.

The protein resides in the cytoplasm. It carries out the reaction 5-[(5-phospho-1-deoxy-D-ribulos-1-ylimino)methylamino]-1-(5-phospho-beta-D-ribosyl)imidazole-4-carboxamide + L-glutamine = D-erythro-1-(imidazol-4-yl)glycerol 3-phosphate + 5-amino-1-(5-phospho-beta-D-ribosyl)imidazole-4-carboxamide + L-glutamate + H(+). The catalysed reaction is L-glutamine + H2O = L-glutamate + NH4(+). It participates in amino-acid biosynthesis; L-histidine biosynthesis; L-histidine from 5-phospho-alpha-D-ribose 1-diphosphate: step 5/9. Functionally, IGPS catalyzes the conversion of PRFAR and glutamine to IGP, AICAR and glutamate. The HisH subunit catalyzes the hydrolysis of glutamine to glutamate and ammonia as part of the synthesis of IGP and AICAR. The resulting ammonia molecule is channeled to the active site of HisF. This chain is Imidazole glycerol phosphate synthase subunit HisH, found in Herpetosiphon aurantiacus (strain ATCC 23779 / DSM 785 / 114-95).